The sequence spans 940 residues: Isoleucine--tRNA ligase (940 aa).

Positions 58–68 (PYANGDIHIGH) match the 'HIGH' region motif. Glutamate 564 lines the L-isoleucyl-5'-AMP pocket. The 'KMSKS' region signature appears at 605–609 (KMSKS). Lysine 608 is an ATP binding site. The Zn(2+) site is built by cysteine 903, cysteine 906, cysteine 923, and cysteine 926.

The protein belongs to the class-I aminoacyl-tRNA synthetase family. IleS type 1 subfamily. Monomer. It depends on Zn(2+) as a cofactor.

It is found in the cytoplasm. The enzyme catalyses tRNA(Ile) + L-isoleucine + ATP = L-isoleucyl-tRNA(Ile) + AMP + diphosphate. Catalyzes the attachment of isoleucine to tRNA(Ile). As IleRS can inadvertently accommodate and process structurally similar amino acids such as valine, to avoid such errors it has two additional distinct tRNA(Ile)-dependent editing activities. One activity is designated as 'pretransfer' editing and involves the hydrolysis of activated Val-AMP. The other activity is designated 'posttransfer' editing and involves deacylation of mischarged Val-tRNA(Ile). This is Isoleucine--tRNA ligase from Shewanella piezotolerans (strain WP3 / JCM 13877).